We begin with the raw amino-acid sequence, 92 residues long: Small ribosomal subunit protein uS19 (92 aa).

It belongs to the universal ribosomal protein uS19 family.

In terms of biological role, protein S19 forms a complex with S13 that binds strongly to the 16S ribosomal RNA. This Methylocella silvestris (strain DSM 15510 / CIP 108128 / LMG 27833 / NCIMB 13906 / BL2) protein is Small ribosomal subunit protein uS19.